Reading from the N-terminus, the 151-residue chain is MNLKTHAFNDRGRIPSRYTCDGENISPPLSWDGVPGEAKSLALICDDPDAPSKVWTHWVIFNIPPDSTGLEENVPDAGRLPDGSVQGYNDSGTLGYRGPCPPSGVHRYFFRLYALDTVLDLEPGASKEDVLEAMEGHVLGEAKLIGLYRRG.

It belongs to the UPF0098 family.

The protein is UPF0098 protein MTH_273 of Methanothermobacter thermautotrophicus (strain ATCC 29096 / DSM 1053 / JCM 10044 / NBRC 100330 / Delta H) (Methanobacterium thermoautotrophicum).